Consider the following 532-residue polypeptide: CTP synthase (532 aa).

The amidoligase domain stretch occupies residues 1 to 267; it reads MAKFVFVTGG…HGLVLDQLQI (267 aa). S13 is a binding site for CTP. S13 serves as a coordination point for UTP. ATP is bound at residue 14-19; it reads GLGKGI. An L-glutamine-binding site is contributed by Y54. D71 contacts ATP. Residues D71 and E141 each coordinate Mg(2+). CTP contacts are provided by residues 148–150, 188–193, and K224; these read DIE and KTKPIQ. Residues 188 to 193 and K224 each bind UTP; that span reads KTKPIQ. The Glutamine amidotransferase type-1 domain maps to 292–532; it reads EVTFVGKYIE…GFVEAIVNNK (241 aa). L-glutamine is bound at residue G354. C381 functions as the Nucleophile; for glutamine hydrolysis in the catalytic mechanism. Residues 382–385, E405, and R462 contribute to the L-glutamine site; that span reads LGMQ. Active-site residues include H507 and E509.

It belongs to the CTP synthase family. Homotetramer.

The enzyme catalyses UTP + L-glutamine + ATP + H2O = CTP + L-glutamate + ADP + phosphate + 2 H(+). The catalysed reaction is L-glutamine + H2O = L-glutamate + NH4(+). It carries out the reaction UTP + NH4(+) + ATP = CTP + ADP + phosphate + 2 H(+). Its pathway is pyrimidine metabolism; CTP biosynthesis via de novo pathway; CTP from UDP: step 2/2. Its activity is regulated as follows. Allosterically activated by GTP, when glutamine is the substrate; GTP has no effect on the reaction when ammonia is the substrate. The allosteric effector GTP functions by stabilizing the protein conformation that binds the tetrahedral intermediate(s) formed during glutamine hydrolysis. Inhibited by the product CTP, via allosteric rather than competitive inhibition. Functionally, catalyzes the ATP-dependent amination of UTP to CTP with either L-glutamine or ammonia as the source of nitrogen. Regulates intracellular CTP levels through interactions with the four ribonucleotide triphosphates. The sequence is that of CTP synthase from Mesoplasma florum (strain ATCC 33453 / NBRC 100688 / NCTC 11704 / L1) (Acholeplasma florum).